Here is a 238-residue protein sequence, read N- to C-terminus: IkB-like protein (238 aa).

4 ANK repeats span residues 48–77, 86–115, 123–152, and 157–187; these read GSSV…PGEI, DGNS…KNGT, NGMT…DPTQ, and RGFT…PLYM. A Nuclear localization signal motif is present at residues 80–86; it reads PHRRDKD. The Nuclear localization signal signature appears at 202 to 213; it reads KKKPKIIITGCK. Positions 205 to 212 match the PxIxITxC motif; Interaction with host PPP3CA motif; sequence PKIIITGC. The FLCV motif signature appears at 227-230; it reads FLCV.

This sequence belongs to the asfivirus A238L family. Interacts with host PPIA. Interacts with host PPP3CA/Calcineurin. Interacts with host RELA/p65; interaction of the 32 kDa form with host RELA results in the formation of a stable complex with NF-kappa-B. Interacts with host PPP3R1. Interacts with host EP300; this interaction inhibits the association of host EP300 with host RELA, JUN and NFATC2. The protein exists in a 28 kDa and a 32 kDa form, probably due to post-translational modifications which are neither phosphorylation, nor sumoylation.

It localises to the host nucleus. The protein resides in the host cytoplasm. Its function is as follows. I-kappa-B- (IkB)-like protein that inhibits the binding of NF-kappa-B to DNA, thereby down-regulating pro-inflammatory cytokine production. Forms a heterodimer with the NF-kappa-B subunit RELA/p65 and prevents the activation of the NF-kappa-B transcription factor. Also inhibits the host calcineurin phosphatase activity, which is required for the induction of nuclear factor of activated T cells(NFAT)-dependent immune response genes. Inhibits calcineurin function, which is required for the induction of nuclear factor of activated T cells (NFAT)-dependent immune response genes. Prevents the binding of substrates to calcineurin without affecting the phosphatase activity. Does not contain the serine residues that are phosphorylated by host IkB kinase and thus is not degraded following stimulation of the NFkB pathway. The polypeptide is IkB-like protein (A238L) (African swine fever virus (strain Badajoz 1971 Vero-adapted) (Ba71V)).